The chain runs to 422 residues: Histidine--tRNA ligase (422 aa).

The protein belongs to the class-II aminoacyl-tRNA synthetase family. Homodimer.

It is found in the cytoplasm. The enzyme catalyses tRNA(His) + L-histidine + ATP = L-histidyl-tRNA(His) + AMP + diphosphate + H(+). In Aliivibrio fischeri (strain ATCC 700601 / ES114) (Vibrio fischeri), this protein is Histidine--tRNA ligase.